The chain runs to 87 residues: uncharacterized protein (87 aa).

The chain crosses the membrane as a helical span at residues 42–62; that stretch reads LADALYSAGSAAFTIAASLVA.

The protein belongs to the SPP1 holin family.

Its subcellular location is the membrane. This is an uncharacterized protein from Bacillus licheniformis.